The sequence spans 366 residues: MNRVILYCRPGFEKECAAEITEKATQHDAYGFARVKENSGYVVFECYQHEDAERLVKTLPFHELIFARQMFVSGELLRDLPPEDRITPIVGMLSGAIERAGELRVEVPDTNESKELMKFCRKFTVPLRAALREHKILLGYEKADRPVLHVLFIAPGCCYVGYSYSNNNSPFYMGIPRLKFPSDAPSRSTLKLEEAFHVFIPADEWDERLGSGMYAVDLGACPGGWTYQLVKRSMMVYAVDNGPMAPSLMETGQVMHHQADGFRFEPPRNNVYWLVCDMVEKPAKVTSLMSDWLIKGWCREAIFNLKLPMKKRYEEVSHNLAVLQERLSENGINAEVHAKHLYHDREEITVHVRRFWSAVPGRRDER.

S-adenosyl-L-methionine-binding positions include Ser188, 221-224, Asp240, Asp260, and Asp277; that span reads CPGG. The Proton acceptor role is filled by Lys306.

Belongs to the class I-like SAM-binding methyltransferase superfamily. RNA methyltransferase RlmE family. RlmM subfamily. Monomer.

It is found in the cytoplasm. The catalysed reaction is cytidine(2498) in 23S rRNA + S-adenosyl-L-methionine = 2'-O-methylcytidine(2498) in 23S rRNA + S-adenosyl-L-homocysteine + H(+). Its function is as follows. Catalyzes the 2'-O-methylation at nucleotide C2498 in 23S rRNA. In Pectobacterium carotovorum subsp. carotovorum (strain PC1), this protein is Ribosomal RNA large subunit methyltransferase M.